The chain runs to 427 residues: BSD domain-containing protein 1 (427 aa).

Phosphoserine occurs at positions 92 and 166. Residues 146-198 (WLSEFCLEEKKGEISELLVGSPSIRALYTKMVPAAVSHSEFWHRYFYKVHQLE) form the BSD domain. The disordered stretch occupies residues 208–397 (KQRADQSISE…ISEDWEKDFD (190 aa)). Acidic residues predominate over residues 219–229 (PGWEEEEEELE). Positions 236–245 (KEAKIPKETK) are enriched in basic and acidic residues. A compositionally biased stretch (low complexity) spans 268–279 (PAEATPSESSES). The span at 324–333 (GPPPPPPSKP) shows a compositional bias: pro residues. A compositionally biased stretch (basic and acidic residues) spans 347–364 (PPARVETLREEVPTDLRV). Thr-353 carries the phosphothreonine modification. The span at 368–387 (NSDSGKSTPSNNGKKGSSTD) shows a compositional bias: polar residues. 2 positions are modified to phosphoserine: Ser-384 and Ser-385. Positions 388 to 397 (ISEDWEKDFD) are enriched in acidic residues. The residue at position 415 (Ser-415) is a Phosphoserine.

The polypeptide is BSD domain-containing protein 1 (Bsdc1) (Mus musculus (Mouse)).